A 1104-amino-acid polypeptide reads, in one-letter code: General transcription factor II-I repeat domain-containing protein 1 (1104 aa).

Glycyl lysine isopeptide (Lys-Gly) (interchain with G-Cter in SUMO2) cross-links involve residues lysine 27, lysine 184, lysine 212, lysine 225, lysine 238, lysine 271, lysine 337, lysine 436, lysine 439, and lysine 443. One copy of the GTF2I-like 1 repeat lies at 119-213 (LEQCSDVYLL…PDDGGQDTKA (95 aa)). A GTF2I-like 2 repeat occupies 342 to 436 (IKEMEDINTL…FDERIFTGNK (95 aa)). A Phosphoserine modification is found at serine 448. The interval 509-559 (SDPSPTSEEMTDSLPGHLPSEDSGYGMEMPADKGPSEEPWSEERPAEESPG) is disordered. Residues 538–555 (PADKGPSEEPWSEERPAE) are compositionally biased toward basic and acidic residues. The stretch at 556–650 (ESPGDVIRPL…ELLTDGVKEP (95 aa)) is one GTF2I-like 3 repeat. Glycyl lysine isopeptide (Lys-Gly) (interchain with G-Cter in SUMO2) cross-links involve residues lysine 567, lysine 579, lysine 588, lysine 622, lysine 638, lysine 669, lysine 709, lysine 717, lysine 757, lysine 759, and lysine 772. A GTF2I-like 4 repeat occupies 681 to 775 (LSRIDIANTL…FQGLIPKPET (95 aa)). The segment at 783–802 (EAGKTTRPRRLQQDTWQPDE) is disordered. One copy of the GTF2I-like 5 repeat lies at 805-899 (ANRLGEKVIL…LQPFAEVCND (95 aa)). Residues lysine 841 and lysine 901 each participate in a glycyl lysine isopeptide (Lys-Gly) (interchain with G-Cter in SUMO2) cross-link. One copy of the GTF2I-like 6 repeat lies at 908-1002 (SNKLGKKVIL…LQPFGDVCNN (95 aa)). 2 disordered regions span residues 1001–1044 (NNAK…VAST) and 1058–1104 (LHPN…LPTR). The Nuclear localization signal signature appears at 1012–1019 (PKRKRKRV). Residues 1021–1043 (EGNSVSSSSSSSSSSSNPESVAS) are compositionally biased toward low complexity.

Belongs to the TFII-I family. Interacts with the retinoblastoma protein (RB1) via its C-terminus. Widely expressed.

It is found in the nucleus. Functionally, may be a transcription regulator involved in cell-cycle progression and skeletal muscle differentiation. May repress GTF2I transcriptional functions, by preventing its nuclear residency, or by inhibiting its transcriptional activation. May contribute to slow-twitch fiber type specificity during myogenesis and in regenerating muscles. Binds troponin I slow-muscle fiber enhancer (USE B1). Binds specifically and with high affinity to the EFG sequences derived from the early enhancer of HOXC8. In Mus musculus (Mouse), this protein is General transcription factor II-I repeat domain-containing protein 1 (Gtf2ird1).